We begin with the raw amino-acid sequence, 187 residues long: Cytochrome b-245 chaperone 1 (187 aa).

Residues 20–42 traverse the membrane as a helical segment; sequence GIRSWSLLVGILSTGLAAAYYSG. The segment at 167 to 187 is disordered; it reads ESPSERSQSSDSEPDGPGGQS. Phosphoserine occurs at positions 168 and 170.

Belongs to the CYBC1 family. Interacts with CYBB; CYBC1 may act as a chaperone stabilizing Cytochrome b-245 heterodimer.

The protein localises to the endoplasmic reticulum membrane. Functionally, functions as a chaperone necessary for a stable expression of the CYBA and CYBB subunits of the cytochrome b-245 heterodimer. Controls the phagocyte respiratory burst and is essential for innate immunity. The chain is Cytochrome b-245 chaperone 1 from Rattus norvegicus (Rat).